The sequence spans 364 residues: BOLA class I histocompatibility antigen, alpha chain BL3-7 (364 aa).

Positions 1 to 27 are cleaved as a signal peptide; sequence MRVMRVMRPRTLLLLLSGVLVLTETLA. The alpha-1 stretch occupies residues 28 to 117; it reads GSHSLRYFYT…LRGYYNQSET (90 aa). At 28–310 the chain is on the extracellular side; sequence GSHSLRYFYT…WEPPQTSFLI (283 aa). N113 is a glycosylation site (N-linked (GlcNAc...) asparagine). Residues 118-209 form an alpha-2 region; that stretch reads GSHNIQAMYG…ENGKDTLLRA (92 aa). 2 cysteine pairs are disulfide-bonded: C128–C191 and C230–C286. Positions 210–301 are alpha-3; that stretch reads DPPKAHVTHH…GLQEPLTLRW (92 aa). The Ig-like C1-type domain occupies 212–298; sequence PKAHVTHHSI…QHEGLQEPLT (87 aa). The segment at 302 to 310 is connecting peptide; sequence EPPQTSFLI. A helical transmembrane segment spans residues 311-331; that stretch reads MGIIVGLVLLVVALVAGAVIW. Residues 332 to 364 are Cytoplasmic-facing; that stretch reads RKKRSGEKGRIYTQAASSDSAQGSDVSLTVPKV. 2 positions are modified to phosphoserine: S355 and S358.

Belongs to the MHC class I family. In terms of assembly, heterodimer of an alpha chain and a beta chain (beta-2-microglobulin).

The protein localises to the membrane. Functionally, involved in the presentation of foreign antigens to the immune system. The protein is BOLA class I histocompatibility antigen, alpha chain BL3-7 of Bos taurus (Bovine).